Here is a 135-residue protein sequence, read N- to C-terminus: Large ribosomal subunit protein uL16c (135 aa).

Belongs to the universal ribosomal protein uL16 family. Part of the 50S ribosomal subunit.

The protein resides in the plastid. It is found in the chloroplast. The sequence is that of Large ribosomal subunit protein uL16c from Stigeoclonium helveticum (Green alga).